The sequence spans 340 residues: PRKC apoptosis WT1 regulator protein (340 aa).

The segment covering 1–18 (MATGGYRTSSGLGGSTTD) has biased composition (polar residues). A disordered region spans residues 1 to 253 (MATGGYRTSS…TDRSGFPRYN (253 aa)). The span at 47–82 (SDAAGKPPAGALGTPAAAAANELNNNLPGGAPAAPA) shows a compositional bias: low complexity. The B30.2/SPRY domain-binding motif motif lies at 68–72 (ELNNN). A Phosphoserine modification is found at serine 108. The short motif at 145–161 (RKGKGQIEKRKLREKRR) is the Nuclear localization signal element. Residues 145 to 203 (RKGKGQIEKRKLREKRRSTGVVNIPAAECLDEYEDDEAGQKERKREDAITQQNTIQNEA) are selective for apoptosis induction in cancer cells (SAC). The residue at position 163 (threonine 163) is a Phosphothreonine; by PKA. Over residues 182 to 192 (AGQKERKREDA) the composition is skewed to basic and acidic residues. Residues 186–206 (ERKREDAITQQNTIQNEAVNL) adopt a coiled-coil conformation. Residues 193–203 (ITQQNTIQNEA) are compositionally biased toward polar residues. Serine 231 is modified (phosphoserine). Positions 242–253 (SRTDRSGFPRYN) are enriched in basic and acidic residues. Residues 300–340 (IGKLKEEIDLLNRDLDDIEDENEQLKQENKTLLKVVGQLTR) are leucine-zipper.

In terms of assembly, homooligomer. Interacts (via the C-terminal region) with WT1. Interacts with THAP1. Interacts with AATF. Interacts with BACE1. Interacts with SPSB1 (via B30.2/SPRY domain); this interaction is direct and occurs in association with the Elongin BC complex. Interacts with SPSB2 (via B30.2/SPRY domain); this interaction occurs in association with the Elongin BC complex. Interacts with SPSB4 (via B30.2/SPRY domain); this interaction occurs in association with the Elongin BC complex. Component of a ternary complex composed of SQSTM1 and PRKCZ. Interacts with actin. Post-translationally, preferentially phosphorylated at the Thr-163 by PKC in cancer cells. In terms of tissue distribution, widely expressed. Expression is elevated in various neurodegenerative diseases such as amyotrophic lateral sclerosis, Alzheimer, Parkinson and Huntington diseases and stroke. Down-regulated in several cancers.

It is found in the cytoplasm. Its subcellular location is the nucleus. Functionally, pro-apoptotic protein capable of selectively inducing apoptosis in cancer cells, sensitizing the cells to diverse apoptotic stimuli and causing regression of tumors in animal models. Induces apoptosis in certain cancer cells by activation of the Fas prodeath pathway and coparallel inhibition of NF-kappa-B transcriptional activity. Inhibits the transcriptional activation and augments the transcriptional repression mediated by WT1. Down-regulates the anti-apoptotic protein BCL2 via its interaction with WT1. Also seems to be a transcriptional repressor by itself. May be directly involved in regulating the amyloid precursor protein (APP) cleavage activity of BACE1. In Homo sapiens (Human), this protein is PRKC apoptosis WT1 regulator protein (PAWR).